We begin with the raw amino-acid sequence, 258 residues long: Cell division protein ZapD (258 aa).

This sequence belongs to the ZapD family. Interacts with FtsZ.

Its subcellular location is the cytoplasm. Functionally, cell division factor that enhances FtsZ-ring assembly. Directly interacts with FtsZ and promotes bundling of FtsZ protofilaments, with a reduction in FtsZ GTPase activity. The sequence is that of Cell division protein ZapD from Coxiella burnetii (strain RSA 331 / Henzerling II).